We begin with the raw amino-acid sequence, 855 residues long: Coiled-coil domain-containing protein 87 (855 aa).

Disordered regions lie at residues 23–43 (LFPSKAKPPPEPPKRPSQDAT) and 278–302 (SRPSPMVPLPSHSPSSESHQFPTSP). The segment covering 287-296 (PSHSPSSESH) has biased composition (low complexity). Coiled coils occupy residues 387-413 (TRRLTAQHHLEKLQQMIKSLQEEEASG) and 764-789 (RSYLQRKLNRMESNLVSLLERIESVF).

Belongs to the CCDC87 family. Specifically expressed in testis (at protein level). Not detected in other tissues tested (at protein level). In the testis, localizes to pachytene spermatocytes and spermatids.

Plays a role in spermatogenesis, where it is important for normal sperm head morphology. Also required for the acrosome reaction and thus normal male fertility. In Mus musculus (Mouse), this protein is Coiled-coil domain-containing protein 87 (Ccdc87).